The primary structure comprises 628 residues: Dihydroxy-acid dehydratase (628 aa).

Asp80 provides a ligand contact to Mg(2+). Cys121 contributes to the [2Fe-2S] cluster binding site. Asp122 and Lys123 together coordinate Mg(2+). The residue at position 123 (Lys123) is an N6-carboxylysine. Cys207 contributes to the [2Fe-2S] cluster binding site. Glu503 provides a ligand contact to Mg(2+). Ser529 (proton acceptor) is an active-site residue.

It belongs to the IlvD/Edd family. As to quaternary structure, homodimer. The cofactor is [2Fe-2S] cluster. Mg(2+) serves as cofactor.

It carries out the reaction (2R)-2,3-dihydroxy-3-methylbutanoate = 3-methyl-2-oxobutanoate + H2O. The enzyme catalyses (2R,3R)-2,3-dihydroxy-3-methylpentanoate = (S)-3-methyl-2-oxopentanoate + H2O. Its pathway is amino-acid biosynthesis; L-isoleucine biosynthesis; L-isoleucine from 2-oxobutanoate: step 3/4. It functions in the pathway amino-acid biosynthesis; L-valine biosynthesis; L-valine from pyruvate: step 3/4. Its function is as follows. Functions in the biosynthesis of branched-chain amino acids. Catalyzes the dehydration of (2R,3R)-2,3-dihydroxy-3-methylpentanoate (2,3-dihydroxy-3-methylvalerate) into 2-oxo-3-methylpentanoate (2-oxo-3-methylvalerate) and of (2R)-2,3-dihydroxy-3-methylbutanoate (2,3-dihydroxyisovalerate) into 2-oxo-3-methylbutanoate (2-oxoisovalerate), the penultimate precursor to L-isoleucine and L-valine, respectively. The chain is Dihydroxy-acid dehydratase from Psychrobacter arcticus (strain DSM 17307 / VKM B-2377 / 273-4).